The sequence spans 333 residues: Ornithine carbamoyltransferase (333 aa).

Residues 57-60 (STRT), glutamine 83, arginine 107, and 134-137 (HPTQ) each bind carbamoyl phosphate. L-ornithine contacts are provided by residues asparagine 168, aspartate 232, and 236–237 (SM). Residues 274 to 275 (CL) and arginine 319 contribute to the carbamoyl phosphate site.

It belongs to the aspartate/ornithine carbamoyltransferase superfamily. OTCase family.

The protein localises to the cytoplasm. It catalyses the reaction carbamoyl phosphate + L-ornithine = L-citrulline + phosphate + H(+). It functions in the pathway amino-acid biosynthesis; L-arginine biosynthesis; L-arginine from L-ornithine and carbamoyl phosphate: step 1/3. Reversibly catalyzes the transfer of the carbamoyl group from carbamoyl phosphate (CP) to the N(epsilon) atom of ornithine (ORN) to produce L-citrulline. The chain is Ornithine carbamoyltransferase from Photobacterium profundum (strain SS9).